Here is a 228-residue protein sequence, read N- to C-terminus: Ribose-5-phosphate isomerase A (228 aa).

Residues 32-35, 85-88, and 98-101 each bind substrate; these read TGST, DGAD, and KGGG. Glu-107 serves as the catalytic Proton acceptor. Position 125 (Lys-125) interacts with substrate.

Belongs to the ribose 5-phosphate isomerase family. As to quaternary structure, homodimer.

The enzyme catalyses aldehydo-D-ribose 5-phosphate = D-ribulose 5-phosphate. It participates in carbohydrate degradation; pentose phosphate pathway; D-ribose 5-phosphate from D-ribulose 5-phosphate (non-oxidative stage): step 1/1. Catalyzes the reversible conversion of ribose-5-phosphate to ribulose 5-phosphate. In Ralstonia pickettii (strain 12J), this protein is Ribose-5-phosphate isomerase A.